The sequence spans 1060 residues: Carbamoyl phosphate synthase large chain (1060 aa).

Residues methionine 1 to glutamate 401 are carboxyphosphate synthetic domain. ATP is bound by residues arginine 129, arginine 169, glycine 175, glycine 176, glutamine 208, isoleucine 210, glutamate 215, glycine 241, isoleucine 242, histidine 243, glutamine 284, and glutamate 298. The ATP-grasp 1 domain occupies lysine 133–valine 327. Positions 284, 298, and 300 each coordinate Mg(2+). Glutamine 284, glutamate 298, and asparagine 300 together coordinate Mn(2+). The oligomerization domain stretch occupies residues isoleucine 402–serine 546. Positions leucine 547–glycine 929 are carbamoyl phosphate synthetic domain. The 191-residue stretch at aspartate 671–leucine 861 folds into the ATP-grasp 2 domain. 10 residues coordinate ATP: arginine 707, arginine 746, leucine 748, glutamate 752, glycine 777, valine 778, histidine 779, serine 780, glutamine 820, and glutamate 832. Mg(2+)-binding residues include glutamine 820, glutamate 832, and asparagine 834. Positions 820, 832, and 834 each coordinate Mn(2+). The MGS-like domain occupies methionine 930–leucine 1060. Positions methionine 930–leucine 1060 are allosteric domain.

Belongs to the CarB family. As to quaternary structure, composed of two chains; the small (or glutamine) chain promotes the hydrolysis of glutamine to ammonia, which is used by the large (or ammonia) chain to synthesize carbamoyl phosphate. Tetramer of heterodimers (alpha,beta)4. Requires Mg(2+) as cofactor. Mn(2+) serves as cofactor.

It carries out the reaction hydrogencarbonate + L-glutamine + 2 ATP + H2O = carbamoyl phosphate + L-glutamate + 2 ADP + phosphate + 2 H(+). The enzyme catalyses hydrogencarbonate + NH4(+) + 2 ATP = carbamoyl phosphate + 2 ADP + phosphate + 2 H(+). It participates in amino-acid biosynthesis; L-arginine biosynthesis; carbamoyl phosphate from bicarbonate: step 1/1. It functions in the pathway pyrimidine metabolism; UMP biosynthesis via de novo pathway; (S)-dihydroorotate from bicarbonate: step 1/3. Its function is as follows. Large subunit of the glutamine-dependent carbamoyl phosphate synthetase (CPSase). CPSase catalyzes the formation of carbamoyl phosphate from the ammonia moiety of glutamine, carbonate, and phosphate donated by ATP, constituting the first step of 2 biosynthetic pathways, one leading to arginine and/or urea and the other to pyrimidine nucleotides. The large subunit (synthetase) binds the substrates ammonia (free or transferred from glutamine from the small subunit), hydrogencarbonate and ATP and carries out an ATP-coupled ligase reaction, activating hydrogencarbonate by forming carboxy phosphate which reacts with ammonia to form carbamoyl phosphate. In Latilactobacillus sakei subsp. sakei (strain 23K) (Lactobacillus sakei subsp. sakei), this protein is Carbamoyl phosphate synthase large chain.